A 179-amino-acid polypeptide reads, in one-letter code: Large ribosomal subunit protein uL5 (179 aa).

Belongs to the universal ribosomal protein uL5 family. As to quaternary structure, part of the 50S ribosomal subunit; part of the 5S rRNA/L5/L18/L25 subcomplex. Contacts the 5S rRNA and the P site tRNA. Forms a bridge to the 30S subunit in the 70S ribosome.

This is one of the proteins that bind and probably mediate the attachment of the 5S RNA into the large ribosomal subunit, where it forms part of the central protuberance. In the 70S ribosome it contacts protein S13 of the 30S subunit (bridge B1b), connecting the 2 subunits; this bridge is implicated in subunit movement. Contacts the P site tRNA; the 5S rRNA and some of its associated proteins might help stabilize positioning of ribosome-bound tRNAs. The polypeptide is Large ribosomal subunit protein uL5 (Bacillus licheniformis (strain ATCC 14580 / DSM 13 / JCM 2505 / CCUG 7422 / NBRC 12200 / NCIMB 9375 / NCTC 10341 / NRRL NRS-1264 / Gibson 46)).